The chain runs to 391 residues: ETS-related transcription factor Elf-3 (391 aa).

In terms of domain architecture, PNT spans D65–S151. Residues Y200 to R271 form a disordered region. Residues P211–A229 show a composition bias toward polar residues. Positions T242–K261 are enriched in basic and acidic residues. Residues H262–R271 are compositionally biased toward basic residues. The segment at residues T293–G375 is a DNA-binding region (ETS).

This sequence belongs to the ETS family. As to quaternary structure, interacts with TBP. Interacts with CREBBP and EP300; these act as transcriptional coactivators of ELF3 and positively modulate its function. Interacts with XRCC5/KU86 and XRCC6/KU70; these inhibit the ability of ELF3 to bind DNA and negatively modulate its transcriptional activity. Associated with CLND7 and POU2F3. Interacts with ZNF768. As to expression, expressed in small intestine, colon, lung, kidney and uterus. Also expressed in the corneal epithelium and conjunctiva of the developing and adult eye. Not detected in liver, spleen, thymus, brain, heart, skeletal muscle or ovary.

It is found in the cytoplasm. Its subcellular location is the nucleus. In terms of biological role, transcriptional activator that binds and transactivates ETS sequences containing the consensus nucleotide core sequence GGA[AT]. Acts synergistically with POU2F3 to transactivate the SPRR2A promoter and with RUNX1 to transactivate the ANGPT1 promoter. Also transactivates collagenase, CCL20, CLND7, FLG, KRT8, NOS2, PTGS2, SPRR2B, TGFBR2 and TGM3 promoters. Represses KRT4 promoter activity. Involved in mediating vascular inflammation. May play an important role in epithelial cell differentiation and tumorigenesis. May be a critical downstream effector of the ERBB2 signaling pathway. May be associated with mammary gland development and involution. Plays an important role in the regulation of transcription with TATA-less promoters in preimplantation embryos, which is essential in preimplantation development. The sequence is that of ETS-related transcription factor Elf-3 from Mus musculus (Mouse).